The sequence spans 35 residues: Z-limacoditoxin(1)-Dv1 (35 aa).

Residues 1–22 (MKKTFLPIFLVILLASYALANP) form the signal peptide. Position 23 is a pyrrolidone carboxylic acid (Gln-23). Pro-32 carries the proline amide modification.

It belongs to the limacoditoxin-1 (ACP-like) family. In terms of tissue distribution, expressed by the venom secretory cell of the spine. The spine is a cuticular structure containing a single large nucleated venom-secreting cell at its base. It is an independent unit capable of producing, storing and injecting venom. On the back of D.vulnerans caterpillars, spines are grouped together by 50 to 100 to form scoli, of which there are eight in D.vulnerans.

Its subcellular location is the secreted. Its function is as follows. Potently activates insect G protein-coupled receptor. It activates the ACP receptor (ACPR) from the mosquito A.aegypti (EC(50)=0.55 nM) with a potency comparable to that of the endogenous ligand. Has no activity on receptors of the closely related neuropeptides adipokinetic hormone and corazonin. In vivo, does not reveal any observable effects when injected into crickets (A.domesticus). Does not induce increase in intracellular calcium in mouse DRG neurons, suggesting that it does not induce pain. The chain is Z-limacoditoxin(1)-Dv1 from Doratifera vulnerans (Mottled cup moth).